Consider the following 392-residue polypeptide: HORMA domain-containing protein 1 (392 aa).

The HORMA domain maps to 25-227 (HQSLMFVKRL…TPFHTFRLKV (203 aa)). Positions 323–359 (SELDVSESKTRSGKIFQSKMVNGNNQQGQTSKENRKR) are disordered. A compositionally biased stretch (polar residues) spans 341 to 353 (KMVNGNNQQGQTS). A Phosphoserine modification is found at S375. The Nuclear localization signal motif lies at 381 to 384 (KKRR).

In terms of assembly, interacts with HORMAD2. Interacts with IHO1. Post-translationally, phosphorylated at Ser-375 in a SPO11-dependent manner. In terms of tissue distribution, specifically expressed in meiotic germ cells.

It localises to the nucleus. The protein localises to the chromosome. The protein resides in the cytoplasm. In terms of biological role, plays a key role in meiotic progression. Regulates 3 different functions during meiosis: ensures that sufficient numbers of processed DNA double-strand breaks (DSBs) are available for successful homology search by increasing the steady-state numbers of single-stranded DSB ends. Promotes synaptonemal-complex formation independently of its role in homology search. Plays a key role in the male mid-pachytene checkpoint and the female meiotic prophase checkpoint: required for efficient build-up of ATR activity on unsynapsed chromosome regions, a process believed to form the basis of meiotic silencing of unsynapsed chromatin (MSUC) and meiotic prophase quality control in both sexes. This is HORMA domain-containing protein 1 from Mus musculus (Mouse).